Here is a 192-residue protein sequence, read N- to C-terminus: uncharacterized protein (192 aa).

The next 2 helical transmembrane spans lie at 31 to 51 (IVET…YVYE) and 119 to 139 (VPGA…LWEI).

It is found in the cell membrane. This is an uncharacterized protein from Thermotoga maritima (strain ATCC 43589 / DSM 3109 / JCM 10099 / NBRC 100826 / MSB8).